Reading from the N-terminus, the 436-residue chain is ATP-dependent protease ATPase subunit HslU (436 aa).

ATP-binding positions include Val-18, 60-65, Asp-249, Glu-314, and Arg-386; that span reads GVGKTE.

It belongs to the ClpX chaperone family. HslU subfamily. As to quaternary structure, a double ring-shaped homohexamer of HslV is capped on each side by a ring-shaped HslU homohexamer. The assembly of the HslU/HslV complex is dependent on binding of ATP.

It is found in the cytoplasm. In terms of biological role, ATPase subunit of a proteasome-like degradation complex; this subunit has chaperone activity. The binding of ATP and its subsequent hydrolysis by HslU are essential for unfolding of protein substrates subsequently hydrolyzed by HslV. HslU recognizes the N-terminal part of its protein substrates and unfolds these before they are guided to HslV for hydrolysis. In Rhizobium rhizogenes (strain K84 / ATCC BAA-868) (Agrobacterium radiobacter), this protein is ATP-dependent protease ATPase subunit HslU.